The chain runs to 304 residues: Protease HtpX homolog (304 aa).

2 helical membrane passes run 19–39 (FIVF…VSYF) and 41–61 (LGEI…YYAY). Residue His146 participates in Zn(2+) binding. Glu147 is an active-site residue. Residue His150 participates in Zn(2+) binding. 2 consecutive transmembrane segments (helical) span residues 156-176 (VRLQ…GDGL) and 192-212 (NILG…ATLL). Glu221 is a binding site for Zn(2+).

This sequence belongs to the peptidase M48B family. It depends on Zn(2+) as a cofactor.

The protein resides in the cell inner membrane. This chain is Protease HtpX homolog, found in Dictyoglomus turgidum (strain DSM 6724 / Z-1310).